Consider the following 229-residue polypeptide: Ribonuclease HII (229 aa).

One can recognise an RNase H type-2 domain in the interval 34-225 (GPVAGVDEAG…VKAAHDQWLQ (192 aa)). A divalent metal cation contacts are provided by D40, E41, and D134.

This sequence belongs to the RNase HII family. Mn(2+) serves as cofactor. Mg(2+) is required as a cofactor.

It localises to the cytoplasm. It catalyses the reaction Endonucleolytic cleavage to 5'-phosphomonoester.. Its function is as follows. Endonuclease that specifically degrades the RNA of RNA-DNA hybrids. The chain is Ribonuclease HII from Corynebacterium diphtheriae (strain ATCC 700971 / NCTC 13129 / Biotype gravis).